A 400-amino-acid polypeptide reads, in one-letter code: Probable protein phosphatase 2C 64 (400 aa).

Residues 47–355 form the PPM-type phosphatase domain; the sequence is DFSMAVVQAN…DDITVIVVFF (309 aa). At Ser-75 the chain carries Phosphoserine. Mn(2+) contacts are provided by Asp-86, Gly-87, Asp-287, and Asp-346.

This sequence belongs to the PP2C family. In terms of assembly, interacts with SAUR19. The cofactor is Mg(2+). Requires Mn(2+) as cofactor.

The catalysed reaction is O-phospho-L-seryl-[protein] + H2O = L-seryl-[protein] + phosphate. The enzyme catalyses O-phospho-L-threonyl-[protein] + H2O = L-threonyl-[protein] + phosphate. Functionally, dephosphorylates and represses plasma membrane H(+)-ATPases (PM H(+)-ATPases, e.g. AHA1 and AHA2), thus influencing negatively plant growth and fitness. The protein is Probable protein phosphatase 2C 64 of Arabidopsis thaliana (Mouse-ear cress).